Reading from the N-terminus, the 130-residue chain is Large ribosomal subunit protein bL12 (130 aa).

The protein belongs to the bacterial ribosomal protein bL12 family. As to quaternary structure, homodimer. Part of the ribosomal stalk of the 50S ribosomal subunit. Forms a multimeric L10(L12)X complex, where L10 forms an elongated spine to which 2 to 4 L12 dimers bind in a sequential fashion. Binds GTP-bound translation factors.

Its function is as follows. Forms part of the ribosomal stalk which helps the ribosome interact with GTP-bound translation factors. Is thus essential for accurate translation. This is Large ribosomal subunit protein bL12 from Cutibacterium acnes (strain DSM 16379 / KPA171202) (Propionibacterium acnes).